Reading from the N-terminus, the 659-residue chain is RNA-binding protein MIP6 (659 aa).

The span at 1–27 (MPNSHGNVLNNISLNSKQNPRSISKSC) shows a compositional bias: polar residues. Positions 1–35 (MPNSHGNVLNNISLNSKQNPRSISKSCPNDKDARQ) are disordered. RRM domains are found at residues 111-189 (NSLF…PSMK), 199-267 (TNVF…GNKI), and 313-389 (KTIL…PGKD).

In terms of assembly, interacts with MEX67.

Its subcellular location is the cytoplasm. The protein is RNA-binding protein MIP6 (MIP6) of Saccharomyces cerevisiae (strain ATCC 204508 / S288c) (Baker's yeast).